A 132-amino-acid polypeptide reads, in one-letter code: Small ribosomal subunit protein uS8 (132 aa).

This sequence belongs to the universal ribosomal protein uS8 family. As to quaternary structure, part of the 30S ribosomal subunit. Contacts proteins S5 and S12.

In terms of biological role, one of the primary rRNA binding proteins, it binds directly to 16S rRNA central domain where it helps coordinate assembly of the platform of the 30S subunit. The chain is Small ribosomal subunit protein uS8 from Ligilactobacillus salivarius (strain UCC118) (Lactobacillus salivarius).